A 277-amino-acid chain; its full sequence is uncharacterized protein (277 aa).

This sequence belongs to the BtpA family.

The protein resides in the mitochondrion. This is an uncharacterized protein from Caenorhabditis elegans.